We begin with the raw amino-acid sequence, 150 residues long: Large-conductance mechanosensitive channel (150 aa).

The next 2 membrane-spanning stretches (helical) occupy residues 14-34 (VIDLAIGIIIGAAFGKIVTSF) and 81-101 (GVFLNSIIDFIIVAVAIFLVV).

This sequence belongs to the MscL family. In terms of assembly, homopentamer.

The protein resides in the cell membrane. Its function is as follows. Channel that opens in response to stretch forces in the membrane lipid bilayer. May participate in the regulation of osmotic pressure changes within the cell. The chain is Large-conductance mechanosensitive channel from Syntrophomonas wolfei subsp. wolfei (strain DSM 2245B / Goettingen).